The chain runs to 252 residues: Secreted LysM effector LysM1 (252 aa).

Residues 20 to 64 (FAIPGDPGDTCDTLSDRWGITIDIFKSLNPGVNCPNLVANMEYCV) enclose the LysM 1 domain. The disordered stretch occupies residues 71–98 (DTPSTTTTAKPTMTPTSTPTKTTTTSTA). The segment covering 72-98 (TPSTTTTAKPTMTPTSTPTKTTTTSTA) has biased composition (low complexity). LysM domains follow at residues 126–172 (KFHL…YVCV) and 204–250 (KFHL…YVCI).

This sequence belongs to the secreted LysM effector family.

It localises to the secreted. Its subcellular location is the cell wall. Secreted effector that binds two substrates, chitin and N-linked oligosaccharides associated with human skin glycoproteins. Could provide the pathogen with three important functions including shielding host cell wall chitin from the human immune system, shielding the pathogen's glycoproteins from host degradation and immune surveillance, and helping facilitate pathogen adhesion to human skin. The protein is Secreted LysM effector LysM1 of Trichophyton rubrum (strain ATCC MYA-4607 / CBS 118892) (Athlete's foot fungus).